A 482-amino-acid polypeptide reads, in one-letter code: tRNA sulfurtransferase (482 aa).

In terms of domain architecture, THUMP spans 61 to 165 (KETLEVLTQT…NDKLNQVIER (105 aa)). ATP-binding positions include 183–184 (LI), Lys-265, Gly-287, and Gln-296. Cys-344 and Cys-456 are joined by a disulfide. Residues 404-482 (VAEHAVVLDI…GFHNVKVYRP (79 aa)) form the Rhodanese domain. Cys-456 (cysteine persulfide intermediate) is an active-site residue.

The protein belongs to the ThiI family.

It localises to the cytoplasm. The catalysed reaction is [ThiI sulfur-carrier protein]-S-sulfanyl-L-cysteine + a uridine in tRNA + 2 reduced [2Fe-2S]-[ferredoxin] + ATP + H(+) = [ThiI sulfur-carrier protein]-L-cysteine + a 4-thiouridine in tRNA + 2 oxidized [2Fe-2S]-[ferredoxin] + AMP + diphosphate. It catalyses the reaction [ThiS sulfur-carrier protein]-C-terminal Gly-Gly-AMP + S-sulfanyl-L-cysteinyl-[cysteine desulfurase] + AH2 = [ThiS sulfur-carrier protein]-C-terminal-Gly-aminoethanethioate + L-cysteinyl-[cysteine desulfurase] + A + AMP + 2 H(+). It participates in cofactor biosynthesis; thiamine diphosphate biosynthesis. Catalyzes the ATP-dependent transfer of a sulfur to tRNA to produce 4-thiouridine in position 8 of tRNAs, which functions as a near-UV photosensor. Also catalyzes the transfer of sulfur to the sulfur carrier protein ThiS, forming ThiS-thiocarboxylate. This is a step in the synthesis of thiazole, in the thiamine biosynthesis pathway. The sulfur is donated as persulfide by IscS. The polypeptide is tRNA sulfurtransferase (Vibrio atlanticus (strain LGP32) (Vibrio splendidus (strain Mel32))).